The following is a 44-amino-acid chain: Photosystem I reaction center subunit IX (44 aa).

The chain crosses the membrane as a helical span at residues 7–27 (YLSVAPVASTLWFVALAGLLI).

The protein belongs to the PsaJ family.

The protein resides in the plastid. The protein localises to the chloroplast thylakoid membrane. Its function is as follows. May help in the organization of the PsaE and PsaF subunits. The protein is Photosystem I reaction center subunit IX of Cicer arietinum (Chickpea).